The following is a 440-amino-acid chain: Peroxisome proliferator-activated receptor delta (440 aa).

The segment at 1–53 (MEQPQEETPEAREEEKEEVAMGDGAPELNGGPEHTLPSSSCADLSQNSSPSSL) is disordered. Residues 36 to 53 (LPSSSCADLSQNSSPSSL) are compositionally biased toward polar residues. Positions 70–144 (NMECRVCGDK…LGMSHNAIRF (75 aa)) form a DNA-binding region, nuclear receptor. 2 consecutive NR C4-type zinc fingers follow at residues 73 to 93 (CRVC…CEGC) and 110 to 132 (CDRI…FQKC). Positions 210–438 (FVIHDIETLW…HPLLQEIYKD (229 aa)) constitute an NR LBD domain.

This sequence belongs to the nuclear hormone receptor family. NR1 subfamily. In terms of assembly, heterodimer with the retinoid X receptor. Interacts (via domain NR LBD) with CRY1 and CRY2 in a ligand-dependent manner. In terms of processing, 'Lys-48'-linked polyubiquitinated; leading to proteasomal degradation. Deubiquitinated and stabilized by OTUD3. As to expression, heart, adrenal and intestine.

The protein resides in the nucleus. Its function is as follows. Ligand-activated transcription factor key mediator of energy metabolism in adipose tissues. Receptor that binds peroxisome proliferators such as hypolipidemic drugs and fatty acids. Has a preference for poly-unsaturated fatty acids, such as gamma-linoleic acid and eicosapentanoic acid. Once activated by a ligand, the receptor binds to promoter elements of target genes. Regulates the peroxisomal beta-oxidation pathway of fatty acids. Functions as transcription activator for the acyl-CoA oxidase gene. Decreases expression of NPC1L1 once activated by a ligand. The polypeptide is Peroxisome proliferator-activated receptor delta (Ppard) (Mus musculus (Mouse)).